The chain runs to 100 residues: Aspartyl/glutamyl-tRNA(Asn/Gln) amidotransferase subunit C (100 aa).

The protein belongs to the GatC family. As to quaternary structure, heterotrimer of A, B and C subunits.

It carries out the reaction L-glutamyl-tRNA(Gln) + L-glutamine + ATP + H2O = L-glutaminyl-tRNA(Gln) + L-glutamate + ADP + phosphate + H(+). It catalyses the reaction L-aspartyl-tRNA(Asn) + L-glutamine + ATP + H2O = L-asparaginyl-tRNA(Asn) + L-glutamate + ADP + phosphate + 2 H(+). Its function is as follows. Allows the formation of correctly charged Asn-tRNA(Asn) or Gln-tRNA(Gln) through the transamidation of misacylated Asp-tRNA(Asn) or Glu-tRNA(Gln) in organisms which lack either or both of asparaginyl-tRNA or glutaminyl-tRNA synthetases. The reaction takes place in the presence of glutamine and ATP through an activated phospho-Asp-tRNA(Asn) or phospho-Glu-tRNA(Gln). This Streptococcus pneumoniae (strain JJA) protein is Aspartyl/glutamyl-tRNA(Asn/Gln) amidotransferase subunit C.